Consider the following 807-residue polypeptide: Leucine--tRNA ligase (807 aa).

Positions 40–51 match the 'HIGH' region motif; it reads PYPSGSGLHVGH. The 'KMSKS' region signature appears at 576-580; it reads KMSKS. Lys579 provides a ligand contact to ATP.

This sequence belongs to the class-I aminoacyl-tRNA synthetase family.

It is found in the cytoplasm. The enzyme catalyses tRNA(Leu) + L-leucine + ATP = L-leucyl-tRNA(Leu) + AMP + diphosphate. In Chlorobaculum tepidum (strain ATCC 49652 / DSM 12025 / NBRC 103806 / TLS) (Chlorobium tepidum), this protein is Leucine--tRNA ligase.